Reading from the N-terminus, the 151-residue chain is Aspartate carbamoyltransferase regulatory chain (151 aa).

The Zn(2+) site is built by Cys108, Cys113, Cys138, and Cys141.

This sequence belongs to the PyrI family. In terms of assembly, contains catalytic and regulatory chains. It depends on Zn(2+) as a cofactor.

In terms of biological role, involved in allosteric regulation of aspartate carbamoyltransferase. This chain is Aspartate carbamoyltransferase regulatory chain, found in Pyrobaculum arsenaticum (strain DSM 13514 / JCM 11321 / PZ6).